Consider the following 147-residue polypeptide: Echinoidin (147 aa).

The C-type lectin domain maps to 1–143 (GCCPTFWTSF…STRHYLICKL (143 aa)). Intrachain disulfides connect Cys-3–Cys-14, Cys-31–Cys-141, and Cys-116–Cys-132. Ser-38 is a glycosylation site (O-linked (Hex) serine). The short motif at 39-41 (RGD) is the Cell attachment site element.

As to quaternary structure, homodimer; disulfide-linked. In terms of processing, the identity of the saccharide is not reported in PubMed:3571253, and it is unlikely to be N-acetylgalactosamine. The sugar attached to Ser-38 is represented simply as Hex. Coelemic fluid.

The protein resides in the secreted. In terms of biological role, role in the defense system of the organism against microorganisms. This lectin is specific for Gal-GalNAc. This chain is Echinoidin, found in Heliocidaris crassispina (Sea urchin).